Here is a 657-residue protein sequence, read N- to C-terminus: KNR4/SMI1 homolog (657 aa).

Disordered stretches follow at residues 168–193 (EQQQRAKSSSELPQTVTPQAVKQKGY), 366–402 (SSSVVNRPTPADAAGQARKTQGYSPMVPGASSNESVS), and 416–657 (LTQT…TVAL). Residues 174 to 187 (KSSSELPQTVTPQA) are compositionally biased toward polar residues. Residues 416–436 (LTQTDASSKGTTKPATPNPMT) show a composition bias toward polar residues. Low complexity-rich tracts occupy residues 444–455 (STPGSPSAAAEA) and 473–482 (TPTVTKESTP). The segment covering 492–504 (LDSKNTETNEDTR) has biased composition (basic and acidic residues). Residues 505-521 (ATNTAHSMAPTVSSAIT) show a composition bias toward polar residues. 3 stretches are compositionally biased toward basic and acidic residues: residues 535 to 561 (KPKDTEKTDDAKDVHEANKQDLTKANE), 569 to 604 (VEPKDNEVSADSKVKARAESKSDHDSKTNNIPEKKV), and 627 to 650 (KSDKKAKPAEDPKEHDLKIEKLNE).

Belongs to the KNR4/SMI1 family.

The sequence is that of KNR4/SMI1 homolog from Eremothecium gossypii (strain ATCC 10895 / CBS 109.51 / FGSC 9923 / NRRL Y-1056) (Yeast).